We begin with the raw amino-acid sequence, 200 residues long: Cytochrome c biogenesis ATP-binding export protein CcmA (200 aa).

Residues 3–200 (LSGRGLRCVR…AREMRIGAAA (198 aa)) form the ABC transporter domain. 35 to 42 (GHNGAGKT) serves as a coordination point for ATP.

This sequence belongs to the ABC transporter superfamily. CcmA exporter (TC 3.A.1.107) family. As to quaternary structure, the complex is composed of two ATP-binding proteins (CcmA) and two transmembrane proteins (CcmB).

The protein localises to the cell inner membrane. The catalysed reaction is heme b(in) + ATP + H2O = heme b(out) + ADP + phosphate + H(+). In terms of biological role, part of the ABC transporter complex CcmAB involved in the biogenesis of c-type cytochromes; once thought to export heme, this seems not to be the case, but its exact role is uncertain. Responsible for energy coupling to the transport system. The sequence is that of Cytochrome c biogenesis ATP-binding export protein CcmA from Rhodopseudomonas palustris (strain BisB5).